The following is a 200-amino-acid chain: Putative glucose-6-phosphate isomerase 2 (200 aa).

Residues His-92, His-94, Glu-101, and His-140 each coordinate Fe cation.

Belongs to the archaeal-type GPI family. As to quaternary structure, homodimer. Requires Fe cation as cofactor.

The protein resides in the cytoplasm. It carries out the reaction alpha-D-glucose 6-phosphate = beta-D-fructose 6-phosphate. Its pathway is carbohydrate degradation; glycolysis; D-glyceraldehyde 3-phosphate and glycerone phosphate from D-glucose: step 2/4. The chain is Putative glucose-6-phosphate isomerase 2 (pgiA2) from Rhizobium meliloti (strain 1021) (Ensifer meliloti).